A 393-amino-acid polypeptide reads, in one-letter code: Rhizopuspepsin (393 aa).

A signal peptide spans 1-21 (MKFTLISSCIAIAALAVAVDA). A propeptide spans 22–68 (APGEKKISIPLAKNPNYKPSAKNAIQKAIAKYNKHKINTSTGGIVPD) (activation peptide). The Peptidase A1 domain maps to 85 to 389 (YYGQVTIGTP…NQGVPEVQIA (305 aa)). Asp-103 is an active-site residue. Residues Cys-116 and Cys-119 are joined by a disulfide bond. Asp-286 is a catalytic residue. Residues Cys-320 and Cys-353 are joined by a disulfide bond.

The protein belongs to the peptidase A1 family.

The catalysed reaction is Hydrolysis of proteins with broad specificity similar to that of pepsin A, preferring hydrophobic residues at P1 and P1'. Clots milk and activates trypsinogen. Does not cleave 4-Gln-|-His-5, but does cleave 10-His-|-Leu-11 and 12-Val-|-Glu-13 in B chain of insulin.. In Rhizopus chinensis (Bread mold), this protein is Rhizopuspepsin.